Reading from the N-terminus, the 1059-residue chain is Tyrosine-protein kinase-like otk (1059 aa).

The N-terminal stretch at 1–23 is a signal peptide; the sequence is MDMLMMWSICLFVCIFMAPFSCG. Residues 24–597 are Extracellular-facing; the sequence is SGSSSRFIQV…GDGGFLATRA (574 aa). 5 Ig-like C2-type domains span residues 28 to 112, 113 to 202, 258 to 377, 380 to 475, and 480 to 570; these read SRFI…REAS, PTAK…RVMS, PEGL…LAIN, PGIL…VSIN, and PKFS…AVLT. The N-linked (GlcNAc...) asparagine glycan is linked to Asn-42. Disulfide bonds link Cys-49–Cys-99, Cys-141–Cys-191, Cys-283–Cys-366, and Cys-411–Cys-459. 7 N-linked (GlcNAc...) asparagine glycosylation sites follow: Asn-348, Asn-429, Asn-441, Asn-456, Asn-469, Asn-524, and Asn-536. A disulfide bond links Cys-502 and Cys-554. The helical transmembrane segment at 598-618 threads the bilayer; sequence VLITMTVALAYIVLVVGLMLW. Topologically, residues 619–1059 are cytoplasmic; it reads CRYRRQARKA…ALSKAMQNSE (441 aa). A disordered region spans residues 639–695; sequence GGEQAGGEGSTSGNPKASEQEPCLGKQQRNGRNGKSKSNGDPQKSDDTACSQQSRAS. Over residues 665 to 693 the composition is skewed to polar residues; the sequence is QQRNGRNGKSKSNGDPQKSDDTACSQQSR. Ser-698 carries the post-translational modification Phosphoserine. The Protein kinase; inactive domain occupies 712–1055; that stretch reads LSELIQIGRG…QLGAALSKAM (344 aa). Residues 739 to 781 form a disordered region; the sequence is AQANDKDSDNDKQHSNSENGSGGSSGSTTLSTLNEKRRSKTSM. Residues 742–753 show a composition bias toward basic and acidic residues; the sequence is NDKDSDNDKQHS.

This sequence belongs to the protein kinase superfamily. Tyr protein kinase family. Insulin receptor subfamily. In terms of assembly, interacts with plexA; component of a receptor complex that mediates the repulsive signaling in response to Semaphorin ligands.

Its subcellular location is the cell membrane. Functionally, acts as a calcium-dependent, homophilic cell adhesion molecule that regulates neural recognition during the development of the nervous system. Component of the repulsive Plexin signaling response to regulate motor axon guidance at the embryonic stage. Also component of a receptor complex that is required in the adult visual system to innervate the lamina layer; specific targeting of R1-R6 axons. The polypeptide is Tyrosine-protein kinase-like otk (Drosophila willistoni (Fruit fly)).